Consider the following 512-residue polypeptide: Phospho-2-dehydro-3-deoxyheptonate aldolase 2, chloroplastic (512 aa).

A chloroplast-targeting transit peptide spans 1–57 (MALTATATTRGGSALPNSCLQTPKFQSLQKPTFISSFPTNKKTKPRTKHISAVQSPP). The disordered stretch occupies residues 37–57 (FPTNKKTKPRTKHISAVQSPP). Cys-126 contributes to the Mn(2+) binding site. Residues Arg-165, 324-325 (ER), Lys-347, and Arg-378 each bind substrate. 3 residues coordinate Mn(2+): His-410, Glu-452, and Asp-482.

It belongs to the class-II DAHP synthase family. Homodimer. Mn(2+) serves as cofactor. In terms of tissue distribution, mostly expressed in leaves and stems, and, to a lower extent, in roots, stigmas, anthers, petal tubes, petal limbs and sepals.

Its subcellular location is the plastid. It localises to the chloroplast. The enzyme catalyses D-erythrose 4-phosphate + phosphoenolpyruvate + H2O = 7-phospho-2-dehydro-3-deoxy-D-arabino-heptonate + phosphate. It functions in the pathway metabolic intermediate biosynthesis; chorismate biosynthesis; chorismate from D-erythrose 4-phosphate and phosphoenolpyruvate: step 1/7. In terms of biological role, involved in the production of volatile organic compounds (VOCs). Catalyzes an aldol-like condensation reaction between phosphoenolpyruvate (PEP) and D-erythrose 4-phosphate (E4P) to generate 3-deoxy-D-arabino-heptulosonate 7-phosphate (DAH7P) and inorganic phosphate. This Petunia hybrida (Petunia) protein is Phospho-2-dehydro-3-deoxyheptonate aldolase 2, chloroplastic.